Consider the following 150-residue polypeptide: Phosphoribosyl-AMP cyclohydrolase (150 aa).

Residue aspartate 93 participates in Mg(2+) binding. Cysteine 94 is a Zn(2+) binding site. Aspartate 95 and aspartate 97 together coordinate Mg(2+). Residues cysteine 112 and cysteine 119 each contribute to the Zn(2+) site.

It belongs to the PRA-CH family. In terms of assembly, homodimer. The cofactor is Mg(2+). Zn(2+) serves as cofactor.

The protein localises to the cytoplasm. It catalyses the reaction 1-(5-phospho-beta-D-ribosyl)-5'-AMP + H2O = 1-(5-phospho-beta-D-ribosyl)-5-[(5-phospho-beta-D-ribosylamino)methylideneamino]imidazole-4-carboxamide. It functions in the pathway amino-acid biosynthesis; L-histidine biosynthesis; L-histidine from 5-phospho-alpha-D-ribose 1-diphosphate: step 3/9. Its function is as follows. Catalyzes the hydrolysis of the adenine ring of phosphoribosyl-AMP. In Rhizobium etli (strain CIAT 652), this protein is Phosphoribosyl-AMP cyclohydrolase.